We begin with the raw amino-acid sequence, 430 residues long: Histidine--tRNA ligase (430 aa).

Belongs to the class-II aminoacyl-tRNA synthetase family. As to quaternary structure, homodimer.

The protein localises to the cytoplasm. It carries out the reaction tRNA(His) + L-histidine + ATP = L-histidyl-tRNA(His) + AMP + diphosphate + H(+). The polypeptide is Histidine--tRNA ligase (Acinetobacter baumannii (strain ATCC 17978 / DSM 105126 / CIP 53.77 / LMG 1025 / NCDC KC755 / 5377)).